The sequence spans 24 residues: Chaperonin GroEL (24 aa).

Belongs to the chaperonin (HSP60) family. In terms of assembly, forms a cylinder of 14 subunits composed of two heptameric rings stacked back-to-back. Interacts with the co-chaperonin GroES.

It localises to the cytoplasm. It carries out the reaction ATP + H2O + a folded polypeptide = ADP + phosphate + an unfolded polypeptide.. Its function is as follows. Together with its co-chaperonin GroES, plays an essential role in assisting protein folding. The GroEL-GroES system forms a nano-cage that allows encapsulation of the non-native substrate proteins and provides a physical environment optimized to promote and accelerate protein folding. The protein is Chaperonin GroEL of Acinetobacter calcoaceticus.